The chain runs to 268 residues: Purine nucleoside phosphorylase (268 aa).

Phosphate is bound by residues Ser36, His68, 88-90 (RIH), and Ala120. Residue Glu189 participates in a purine D-ribonucleoside binding. Ser208 provides a ligand contact to phosphate. Asn231 is a binding site for a purine D-ribonucleoside.

It belongs to the PNP/MTAP phosphorylase family. In terms of assembly, homotrimer.

The enzyme catalyses a purine 2'-deoxy-D-ribonucleoside + phosphate = a purine nucleobase + 2-deoxy-alpha-D-ribose 1-phosphate. It functions in the pathway purine metabolism; purine nucleoside salvage. In terms of biological role, the purine nucleoside phosphorylases catalyze the phosphorolytic breakdown of the N-glycosidic bond in the beta-(deoxy)ribonucleoside molecules, with the formation of the corresponding free purine bases and pentose-1-phosphate. Cleaves guanosine, inosine, 2'-deoxyguanosine and 2'-deoxyinosine. This is Purine nucleoside phosphorylase (punA) from Mycobacterium bovis (strain ATCC BAA-935 / AF2122/97).